A 495-amino-acid polypeptide reads, in one-letter code: MERWWFNSMLFKKEFERRCGLNKSMGSLGPIENTNEDPNRKVKNIHSWRNRDNSSCSNVDYLFGVKDIRNFISDDTFLVSDRNGDSYSIYFDIENHIFEIDNDHSFLSELESSFYSYRNSNYRNNGFRGEDPYYNSYMYDTQYSWNNHINSCIDSYLQSQICIDTSIISGSENYGDSYIYRAVCGGESRNSSENEGSSRRTRTKGSDLTIRESSNDLEVTQKYRHLWVQCENCYGLNYKKFLKSKMNICEQCGYHLKMSSSDRIELLIDPGTWDPMDEDMVSLDPIEFHSEEEPYKDRIDSYQRKTGLTEAVQTGIGQLNGIPVAIGVMDFQFMGGSMGSVVGEKITRLIEYAANQILPLIIVCASGGARMQEGSLSLMQMAKISSALYDYQLNKKLFYVSILTSPTTGGVTASFGMLGDIIIAEPNAYIAFAGKRVIEQTLNKTVPEGSQAAEYLFQKGLFDLIVPRNLLKSVLSELFKLHAFFPLNQKSSKIK.

The interval 187 to 208 (ESRNSSENEGSSRRTRTKGSDL) is disordered. The CoA carboxyltransferase N-terminal domain maps to 226–495 (LWVQCENCYG…PLNQKSSKIK (270 aa)). Residues Cys-230, Cys-233, Cys-249, and Cys-252 each contribute to the Zn(2+) site. The C4-type zinc-finger motif lies at 230–252 (CENCYGLNYKKFLKSKMNICEQC).

This sequence belongs to the AccD/PCCB family. In terms of assembly, acetyl-CoA carboxylase is a heterohexamer composed of biotin carboxyl carrier protein, biotin carboxylase and 2 subunits each of ACCase subunit alpha and ACCase plastid-coded subunit beta (accD). The cofactor is Zn(2+). As to expression, RNA expressed in leaf, root and stem; the least expression occurs in stems.

The protein localises to the plastid. It is found in the chloroplast stroma. The enzyme catalyses N(6)-carboxybiotinyl-L-lysyl-[protein] + acetyl-CoA = N(6)-biotinyl-L-lysyl-[protein] + malonyl-CoA. It participates in lipid metabolism; malonyl-CoA biosynthesis; malonyl-CoA from acetyl-CoA: step 1/1. Its function is as follows. Component of the acetyl coenzyme A carboxylase (ACC) complex. Biotin carboxylase (BC) catalyzes the carboxylation of biotin on its carrier protein (BCCP) and then the CO(2) group is transferred by the transcarboxylase to acetyl-CoA to form malonyl-CoA. This Nicotiana tabacum (Common tobacco) protein is Acetyl-coenzyme A carboxylase carboxyl transferase subunit beta, chloroplastic.